The chain runs to 483 residues: Matrix metalloproteinase-20 (483 aa).

Positions 1–22 (MKVLPASGLAVLLVTALKFSAA) are cleaved as a signal peptide. A propeptide spans 23-107 (APSLFAATPR…PRCGVPDVAN (85 aa)) (activation peptide). The Cysteine switch motif lies at 98 to 105 (PRCGVPDV). Cys-100 contacts Zn(2+). 3 residues coordinate Ca(2+): Glu-164, Ala-165, and Asp-166. Positions 176 and 178 each coordinate Zn(2+). Residues Asp-183, Gly-184, Arg-186, and Thr-188 each coordinate Ca(2+). Residue His-191 participates in Zn(2+) binding. The Ca(2+) site is built by Glu-197, Gly-198, Gly-200, and Asp-202. Zn(2+) is bound at residue His-204. Residues Asp-206 and Glu-209 each contribute to the Ca(2+) site. Residue His-226 coordinates Zn(2+). The active site involves Glu-227. Residues His-230 and His-236 each coordinate Zn(2+). Hemopexin repeat units lie at residues 293 to 343 (PDIC…FPQL), 344 to 389 (MSNV…GFPR), 391 to 439 (VQRI…FSGV), and 440 to 483 (NGQI…WIGC). Cys-296 and Cys-483 are oxidised to a cystine.

This sequence belongs to the peptidase M10A family. Zn(2+) is required as a cofactor. The cofactor is Ca(2+). Autoactivates at least at the 107-Asn-|-Tyr-108 site. In terms of tissue distribution, expressed specifically in the enamel organ.

It localises to the secreted. The protein localises to the extracellular space. It is found in the extracellular matrix. In terms of biological role, degrades amelogenin, the major protein component of the enamel matrix and two of the macromolecules characterizing the cartilage extracellular matrix: aggrecan and the cartilage oligomeric matrix protein (COMP). May play a central role in tooth enamel formation. The chain is Matrix metalloproteinase-20 (MMP20) from Sus scrofa (Pig).